Reading from the N-terminus, the 260-residue chain is PHD finger protein ALFIN-LIKE 5 (260 aa).

Methionine 1 carries the N-acetylmethionine modification. Positions 142–203 are disordered; the sequence is AEKQTKEMPS…EEDEDEDEHG (62 aa). Residues 148-165 show a composition bias toward polar residues; that stretch reads EMPSSANQNGNRSKSNSK. The segment covering 167-181 has biased composition (basic and acidic residues); it reads RGLESKSSKTIHAKD. Over residues 182–202 the composition is skewed to acidic residues; it reads EEEGLELEEGEEEEDEDEDEH. Residues 204–256 form a PHD-type zinc finger; it reads ETLCGACGDNYASDEFWICCDMCEKWFHGECVKITPARAEHIKHYKCPTCSNK.

The protein belongs to the Alfin family. Interacts with H3K4me3 and to a lesser extent with H3K4me2. Ubiquitously expressed.

It localises to the nucleus. Histone-binding component that specifically recognizes H3 tails trimethylated on 'Lys-4' (H3K4me3), which mark transcription start sites of virtually all active genes. In Arabidopsis thaliana (Mouse-ear cress), this protein is PHD finger protein ALFIN-LIKE 5 (AL5).